Reading from the N-terminus, the 326-residue chain is MDYTHQTALIPCGQDKYMPKSELLLHLKTYNLYYEGQNLQLRHREEEDEFIVEGLLNISWGLRRPIRLQMQDDHERIRPPPSSSSWHSGCNLGAQGTTLKPLTVPTVQISEVDMPVENMEMHSPTDSRGLKPVQEDTPQLMRTRSDVGVRRRGNVRTSSDQRRIRRHRFSINGHFYNHKTSVFTPAYGSVTNVRINSTMTTPQVLKLLLNKFKIENSAEEFALYVVHTSGEKQKLKNSDYPLIARILQGPCEQISKVFLMEKDQVEEVTYDVAQYIKFEMPVLKSFIQKLQEEEDREVEKLMQKYTVLRLMIRQRLEEIAETPETI.

Residues 176–264 (YNHKTSVFTP…SKVFLMEKDQ (89 aa)) form the Ras-associating domain. The 48-residue stretch at 272-319 (VAQYIKFEMPVLKSFIQKLQEEEDREVEKLMQKYTVLRLMIRQRLEEI) folds into the SARAH domain.

In terms of assembly, interacts directly with activated KRAS in a GTP-dependent manner. Interacts (via SARAH domain) with STK3/MST2 and STK4/MST1. Phosphorylated by STK3/MST2 and STK4/MST1.

It is found in the nucleus. The protein localises to the cytoplasm. It localises to the chromosome. Its subcellular location is the centromere. The protein resides in the kinetochore. Functionally, potential tumor suppressor. Acts as a KRAS-specific effector protein. May promote apoptosis and cell cycle arrest. Stabilizes STK3/MST2 by protecting it from proteasomal degradation. The sequence is that of Ras association domain-containing protein 2 (Rassf2) from Rattus norvegicus (Rat).